The following is a 141-amino-acid chain: Auxin-responsive protein SAUR62 (141 aa).

Belongs to the ARG7 family. Expressed in stamen filaments and petals.

It localises to the cell membrane. May promote auxin-stimulated organ elongation, such as hypocotyls, stamen filaments and petals. This is Auxin-responsive protein SAUR62 from Arabidopsis thaliana (Mouse-ear cress).